Reading from the N-terminus, the 365-residue chain is 2-aminoethylphosphonate--pyruvate transaminase (365 aa).

An N6-(pyridoxal phosphate)lysine modification is found at Lys194.

The protein belongs to the class-V pyridoxal-phosphate-dependent aminotransferase family. PhnW subfamily. Homodimer. The cofactor is pyridoxal 5'-phosphate.

It carries out the reaction (2-aminoethyl)phosphonate + pyruvate = phosphonoacetaldehyde + L-alanine. Its function is as follows. Involved in phosphonate degradation. This chain is 2-aminoethylphosphonate--pyruvate transaminase, found in Bacillus mycoides (strain KBAB4) (Bacillus weihenstephanensis).